The following is a 602-amino-acid chain: Sulfite reductase [NADPH] hemoprotein beta-component (602 aa).

The interval 1–23 (MDDTKTASPAPARAYETPPAERP) is disordered. [4Fe-4S] cluster contacts are provided by Cys458, Cys464, Cys503, and Cys507. Cys507 lines the siroheme pocket.

Belongs to the nitrite and sulfite reductase 4Fe-4S domain family. As to quaternary structure, alpha(8)-beta(8). The alpha component is a flavoprotein, the beta component is a hemoprotein. It depends on siroheme as a cofactor. [4Fe-4S] cluster is required as a cofactor.

The enzyme catalyses hydrogen sulfide + 3 NADP(+) + 3 H2O = sulfite + 3 NADPH + 4 H(+). The protein operates within sulfur metabolism; hydrogen sulfide biosynthesis; hydrogen sulfide from sulfite (NADPH route): step 1/1. Functionally, component of the sulfite reductase complex that catalyzes the 6-electron reduction of sulfite to sulfide. This is one of several activities required for the biosynthesis of L-cysteine from sulfate. In Methylobacterium sp. (strain 4-46), this protein is Sulfite reductase [NADPH] hemoprotein beta-component.